A 429-amino-acid polypeptide reads, in one-letter code: Ribosomal RNA small subunit methyltransferase B (429 aa).

S-adenosyl-L-methionine contacts are provided by residues 254–260 (CAAPGGK), Asp277, Asp303, and Asp322. The Nucleophile role is filled by Cys375. Positions 397–419 (ALSETGTPDQPGQQNLPGGEEGD) are disordered. The segment covering 400-412 (ETGTPDQPGQQNL) has biased composition (polar residues).

Belongs to the class I-like SAM-binding methyltransferase superfamily. RsmB/NOP family.

The protein resides in the cytoplasm. It catalyses the reaction cytidine(967) in 16S rRNA + S-adenosyl-L-methionine = 5-methylcytidine(967) in 16S rRNA + S-adenosyl-L-homocysteine + H(+). Functionally, specifically methylates the cytosine at position 967 (m5C967) of 16S rRNA. The protein is Ribosomal RNA small subunit methyltransferase B of Salmonella newport (strain SL254).